The sequence spans 350 residues: D-guloside 3-dehydrogenase (350 aa).

Belongs to the zinc-containing alcohol dehydrogenase family. Requires Zn(2+) as cofactor.

The enzyme catalyses a D-guloside + NAD(+) = a 3-dehydro-D-guloside + NADH + H(+). Its function is as follows. Catalyzes the NAD(+)-dependent oxidation of the hydroxyl group at C3 of D-gulosides leading to 3-dehydro-D-gulosides. Probably functions in a metabolic pathway that transforms D-gulosides to D-glucosides. Is also able to catalyze the reverse reactions, i.e. the NADH-dependent reduction of the oxo group at C3 of 3-dehydro-D-gulosides leading to D-gulosides. In vitro, can oxidize D-gulose and methyl beta-D-guloside, and reduce methyl alpha-3-dehydro-D-guloside and methyl beta-3-dehydro-D-guloside. However, the actual specific physiological substrates for this metabolic pathway are unknown. This Shigella flexneri protein is D-guloside 3-dehydrogenase (ycjQ).